We begin with the raw amino-acid sequence, 505 residues long: Putative thymidine phosphorylase (505 aa).

It belongs to the thymidine/pyrimidine-nucleoside phosphorylase family. Type 2 subfamily.

It carries out the reaction thymidine + phosphate = 2-deoxy-alpha-D-ribose 1-phosphate + thymine. The chain is Putative thymidine phosphorylase from Tolumonas auensis (strain DSM 9187 / NBRC 110442 / TA 4).